A 347-amino-acid chain; its full sequence is Leukocyte cell-derived chemotaxin 1 (347 aa).

The interval methionine 1–alanine 29 is disordered. A helical membrane pass occupies residues valine 45–lysine 65. Residues glycine 103–leucine 200 enclose the BRICHOS domain. Cysteine 130 and cysteine 192 are joined by a disulfide. The interval lysine 208–glutamate 281 is disordered. Residues arginine 210–arginine 213 constitute a propeptide that is removed on maturation. Residues threonine 240–asparagine 276 show a composition bias toward polar residues. The N-linked (GlcNAc...) asparagine glycan is linked to asparagine 256. Intrachain disulfides connect cysteine 295–cysteine 299, cysteine 296–cysteine 336, cysteine 306–cysteine 330, and cysteine 310–cysteine 326.

It belongs to the chondromodulin-1 family. In terms of processing, after cleavage, the post-translationally modified ChM-I is secreted as a glycoprotein. In terms of tissue distribution, expressed in the cartilage and in fetal precartilaginous tissues as well as in heart and eye.

It is found in the secreted. The protein localises to the extracellular space. Its subcellular location is the extracellular matrix. The protein resides in the endomembrane system. Its function is as follows. Bifunctional growth regulator. May contribute to the rapid growth of cartilage and vascular invasion prior to the replacement of cartilage by bone during endochondral bone development. Plays a role as antiangiogenic factor in cardiac valves to suppress neovascularization. The polypeptide is Leukocyte cell-derived chemotaxin 1 (Gallus gallus (Chicken)).